The chain runs to 319 residues: Acetyl-coenzyme A carboxylase carboxyl transferase subunit alpha (319 aa).

A CoA carboxyltransferase C-terminal domain is found at 31–292 (EIDSAIRSLR…KTYLSRQLSE (262 aa)).

This sequence belongs to the AccA family. As to quaternary structure, acetyl-CoA carboxylase is a heterohexamer composed of biotin carboxyl carrier protein (AccB), biotin carboxylase (AccC) and two subunits each of ACCase subunit alpha (AccA) and ACCase subunit beta (AccD).

Its subcellular location is the cytoplasm. The catalysed reaction is N(6)-carboxybiotinyl-L-lysyl-[protein] + acetyl-CoA = N(6)-biotinyl-L-lysyl-[protein] + malonyl-CoA. Its pathway is lipid metabolism; malonyl-CoA biosynthesis; malonyl-CoA from acetyl-CoA: step 1/1. Functionally, component of the acetyl coenzyme A carboxylase (ACC) complex. First, biotin carboxylase catalyzes the carboxylation of biotin on its carrier protein (BCCP) and then the CO(2) group is transferred by the carboxyltransferase to acetyl-CoA to form malonyl-CoA. The protein is Acetyl-coenzyme A carboxylase carboxyl transferase subunit alpha of Rhodopirellula baltica (strain DSM 10527 / NCIMB 13988 / SH1).